The following is a 123-amino-acid chain: Large ribosomal subunit protein uL14 (123 aa).

It belongs to the universal ribosomal protein uL14 family. As to quaternary structure, part of the 50S ribosomal subunit. Forms a cluster with proteins L3 and L19. In the 70S ribosome, L14 and L19 interact and together make contacts with the 16S rRNA in bridges B5 and B8.

Binds to 23S rRNA. Forms part of two intersubunit bridges in the 70S ribosome. This is Large ribosomal subunit protein uL14 from Koribacter versatilis (strain Ellin345).